The following is a 344-amino-acid chain: Dihydroorotate dehydrogenase (quinone) (344 aa).

FMN contacts are provided by residues 64–68 (AGLDK) and threonine 88. Lysine 68 contributes to the substrate binding site. 113-117 (NRMGF) is a binding site for substrate. FMN-binding residues include asparagine 144 and asparagine 177. Asparagine 177 is a binding site for substrate. The Nucleophile role is filled by serine 180. Asparagine 182 lines the substrate pocket. Residues lysine 222 and threonine 250 each coordinate FMN. 251-252 (NT) lines the substrate pocket. FMN-binding positions include glycine 273, glycine 302, and 323 to 324 (YS).

This sequence belongs to the dihydroorotate dehydrogenase family. Type 2 subfamily. As to quaternary structure, monomer. Requires FMN as cofactor.

The protein localises to the cell membrane. The enzyme catalyses (S)-dihydroorotate + a quinone = orotate + a quinol. The protein operates within pyrimidine metabolism; UMP biosynthesis via de novo pathway; orotate from (S)-dihydroorotate (quinone route): step 1/1. Catalyzes the conversion of dihydroorotate to orotate with quinone as electron acceptor. In Polynucleobacter asymbioticus (strain DSM 18221 / CIP 109841 / QLW-P1DMWA-1) (Polynucleobacter necessarius subsp. asymbioticus), this protein is Dihydroorotate dehydrogenase (quinone).